Reading from the N-terminus, the 547-residue chain is Dihydrolipoyllysine-residue acetyltransferase component of pyruvate dehydrogenase complex (547 aa).

Residues 2-75 (SELIRVPDIG…KEGDEILELE (74 aa)) enclose the Lipoyl-binding 1 domain. The residue at position 41 (lysine 41) is an N6-lipoyllysine. The tract at residues 75-117 (EVEGGEQPAEAKAEAAPAQPEAPKAEAPAPAPSESKPAAPAAA) is disordered. The span at 80–117 (EQPAEAKAEAAPAQPEAPKAEAPAPAPSESKPAAPAAA) shows a compositional bias: low complexity. Residues 119–193 (VQDIKVPDIG…GTGDLILKLK (75 aa)) form the Lipoyl-binding 2 domain. Lysine 159 carries the post-translational modification N6-lipoyllysine. Positions 202-231 (EEQPAAAPAQAAAPAAEQKPAAAAPAPAKA) are enriched in low complexity. Residues 202 to 248 (EEQPAAAPAQAAAPAAEQKPAAAAPAPAKADTPAPVGAPSRDGAKVH) form a disordered region. Residues 248–285 (HAGPAVRMLAREFGVELSEVKASGPKGRILKEDVQVFV) form the Peripheral subunit-binding (PSBD) domain. Histidine 520 is a catalytic residue.

Belongs to the 2-oxoacid dehydrogenase family. Forms a 24-polypeptide structural core with octahedral symmetry. (R)-lipoate serves as cofactor.

The enzyme catalyses N(6)-[(R)-dihydrolipoyl]-L-lysyl-[protein] + acetyl-CoA = N(6)-[(R)-S(8)-acetyldihydrolipoyl]-L-lysyl-[protein] + CoA. The pyruvate dehydrogenase complex catalyzes the overall conversion of pyruvate to acetyl-CoA and CO(2). It contains multiple copies of three enzymatic components: pyruvate dehydrogenase (E1), dihydrolipoamide acetyltransferase (E2) and lipoamide dehydrogenase (E3). The chain is Dihydrolipoyllysine-residue acetyltransferase component of pyruvate dehydrogenase complex (aceF) from Pseudomonas aeruginosa (strain ATCC 15692 / DSM 22644 / CIP 104116 / JCM 14847 / LMG 12228 / 1C / PRS 101 / PAO1).